We begin with the raw amino-acid sequence, 375 residues long: 4,4'-diaponeurosporenoate glycosyltransferase (375 aa).

A run of 4 helical transmembrane segments spans residues W3–F23, F164–S184, I277–L297, and F330–I350.

This sequence belongs to the glycosyltransferase 2 family. CrtQ subfamily.

Its subcellular location is the cell membrane. It participates in carotenoid biosynthesis; staphyloxanthin biosynthesis; staphyloxanthin from farnesyl diphosphate: step 4/5. Functionally, catalyzes the glycosylation of 4,4'-diaponeurosporenoate, i.e. the esterification of glucose at the C1'' position with the carboxyl group of 4,4'-diaponeurosporenic acid, to form glycosyl-4,4'-diaponeurosporenoate. This is a step in the biosynthesis of staphyloxanthin, an orange pigment present in most staphylococci strains. This chain is 4,4'-diaponeurosporenoate glycosyltransferase (crtQ), found in Staphylococcus aureus (strain bovine RF122 / ET3-1).